The sequence spans 537 residues: DNA-directed primase/polymerase protein (537 aa).

A coiled-coil region spans residues 1–22 (MLRKWEARVKQIEERASHYERK). Substrate is bound by residues Arg-76, 114-116 (DLE), 165-169 (KFSRH), 270-273 (RNFR), and Lys-279. Residues Asp-114 and Glu-116 each contribute to the Mn(2+) site. Zn(2+) is bound by residues Cys-401, His-408, Cys-428, and Cys-433. The short motif at 401-434 (CENIGRAHKSNNIMILVDLKNEVWYQKCHDPVCK) is the Zinc knuckle motif element. The tract at residues 462-481 (SGETDDTSTSLTKDSQTPPS) is disordered. Residues 462–536 (SGETDDTSTS…DELIIEALQN (75 aa)) form an interaction with RPA1 region. Residues 468 to 478 (TSTSLTKDSQT) are compositionally biased toward low complexity. 2 short sequence motifs (RPA1-binding motif) span residues 494 to 507 (WDDEDDALFLEATE) and 524 to 532 (DIPDELIIE).

Belongs to the eukaryotic-type primase small subunit family. In terms of assembly, interacts with RPA1; leading to recruitment to chromatin and stimulate DNA primase activity. Interacts with SSBP1. Interacts with POLDIP2; leading to enhance DNA polymerase activity. Mn(2+) is required as a cofactor.

The protein resides in the nucleus. It is found in the mitochondrion matrix. Its subcellular location is the chromosome. The catalysed reaction is ssDNA + n NTP = ssDNA/pppN(pN)n-1 hybrid + (n-1) diphosphate.. It carries out the reaction DNA(n) + a 2'-deoxyribonucleoside 5'-triphosphate = DNA(n+1) + diphosphate. In terms of biological role, DNA primase and DNA polymerase required to tolerate replication-stalling lesions by bypassing them. Required to facilitate mitochondrial and nuclear replication fork progression by initiating de novo DNA synthesis using dNTPs and acting as an error-prone DNA polymerase able to bypass certain DNA lesions. Shows a high capacity to tolerate DNA damage lesions such as 8oxoG and abasic sites in DNA. Provides different translesion synthesis alternatives when DNA replication is stalled: able to synthesize DNA primers downstream of lesions, such as ultraviolet (UV) lesions, R-loops and G-quadruplexes, to allow DNA replication to continue. Can also realign primers ahead of 'unreadable lesions' such as abasic sites and 6-4 photoproduct (6-4 pyrimidine-pyrimidinone), thereby skipping the lesion. Repriming avoids fork degradation while leading to accumulation of internal ssDNA gaps behind the forks. Also able to incorporate nucleotides opposite DNA lesions such as 8oxoG, like a regular translesion synthesis DNA polymerase. Also required for reinitiating stalled forks after UV damage during nuclear DNA replication. Required for mitochondrial DNA (mtDNA) synthesis and replication, by reinitiating synthesis after UV damage or in the presence of chain-terminating nucleotides. Prevents APOBEC family-mediated DNA mutagenesis by repriming downstream of abasic site to prohibit error-prone translesion synthesis. Has non-overlapping function with POLH. In addition to its role in DNA damage response, also required to maintain efficient nuclear and mitochondrial DNA replication in unperturbed cells. This chain is DNA-directed primase/polymerase protein, found in Mus musculus (Mouse).